The primary structure comprises 370 residues: 3-isopropylmalate dehydrogenase (370 aa).

An NAD(+)-binding site is contributed by 77-90; that stretch reads GPKWDSVPYEVRPE. The substrate site is built by R97, R107, R135, and D226. Positions 226, 250, and 254 each coordinate Mg(2+). 290-302 provides a ligand contact to NAD(+); that stretch reads GSAPDIAGKGIAN.

The protein belongs to the isocitrate and isopropylmalate dehydrogenases family. LeuB type 1 subfamily. Homodimer. Mg(2+) serves as cofactor. Mn(2+) is required as a cofactor.

It localises to the cytoplasm. It catalyses the reaction (2R,3S)-3-isopropylmalate + NAD(+) = 4-methyl-2-oxopentanoate + CO2 + NADH. The protein operates within amino-acid biosynthesis; L-leucine biosynthesis; L-leucine from 3-methyl-2-oxobutanoate: step 3/4. In terms of biological role, catalyzes the oxidation of 3-carboxy-2-hydroxy-4-methylpentanoate (3-isopropylmalate) to 3-carboxy-4-methyl-2-oxopentanoate. The product decarboxylates to 4-methyl-2 oxopentanoate. This chain is 3-isopropylmalate dehydrogenase, found in Brucella abortus (strain 2308).